Here is a 642-residue protein sequence, read N- to C-terminus: Chaperone protein DnaK (642 aa).

At threonine 198 the chain carries Phosphothreonine; by autocatalysis. The disordered stretch occupies residues 602-642; that stretch reads AYAKMTEKQQSDDGAGTQNADHKEDDVVDADFEEVKSDKKD.

This sequence belongs to the heat shock protein 70 family.

Its function is as follows. Acts as a chaperone. The sequence is that of Chaperone protein DnaK from Dichelobacter nodosus (strain VCS1703A).